The sequence spans 360 residues: Phospho-N-acetylmuramoyl-pentapeptide-transferase (360 aa).

10 helical membrane passes run Gly-27–Leu-47, Gly-70–Trp-90, Val-98–Leu-118, Leu-134–Ala-154, Ala-168–Gly-188, Gly-199–Val-219, Leu-239–Pro-259, Ile-263–Ala-283, Ile-288–Val-308, and Gln-337–Leu-357.

It belongs to the glycosyltransferase 4 family. MraY subfamily. It depends on Mg(2+) as a cofactor.

The protein resides in the cell inner membrane. It catalyses the reaction UDP-N-acetyl-alpha-D-muramoyl-L-alanyl-gamma-D-glutamyl-meso-2,6-diaminopimeloyl-D-alanyl-D-alanine + di-trans,octa-cis-undecaprenyl phosphate = di-trans,octa-cis-undecaprenyl diphospho-N-acetyl-alpha-D-muramoyl-L-alanyl-D-glutamyl-meso-2,6-diaminopimeloyl-D-alanyl-D-alanine + UMP. Its pathway is cell wall biogenesis; peptidoglycan biosynthesis. Functionally, catalyzes the initial step of the lipid cycle reactions in the biosynthesis of the cell wall peptidoglycan: transfers peptidoglycan precursor phospho-MurNAc-pentapeptide from UDP-MurNAc-pentapeptide onto the lipid carrier undecaprenyl phosphate, yielding undecaprenyl-pyrophosphoryl-MurNAc-pentapeptide, known as lipid I. This chain is Phospho-N-acetylmuramoyl-pentapeptide-transferase, found in Methylorubrum populi (strain ATCC BAA-705 / NCIMB 13946 / BJ001) (Methylobacterium populi).